The sequence spans 411 residues: Multifunctional CCA protein (411 aa).

Gly-8 and Arg-11 together coordinate ATP. CTP is bound by residues Gly-8 and Arg-11. Residues Asp-21 and Asp-23 each coordinate Mg(2+). Arg-91, Arg-137, and Arg-140 together coordinate ATP. Arg-91, Arg-137, and Arg-140 together coordinate CTP. The region spanning 226-327 is the HD domain; sequence TGVHVMLVID…LRFLQETDAL (102 aa).

Belongs to the tRNA nucleotidyltransferase/poly(A) polymerase family. Bacterial CCA-adding enzyme type 1 subfamily. In terms of assembly, monomer. Can also form homodimers and oligomers. The cofactor is Mg(2+). It depends on Ni(2+) as a cofactor.

The catalysed reaction is a tRNA precursor + 2 CTP + ATP = a tRNA with a 3' CCA end + 3 diphosphate. It catalyses the reaction a tRNA with a 3' CCA end + 2 CTP + ATP = a tRNA with a 3' CCACCA end + 3 diphosphate. Catalyzes the addition and repair of the essential 3'-terminal CCA sequence in tRNAs without using a nucleic acid template. Adds these three nucleotides in the order of C, C, and A to the tRNA nucleotide-73, using CTP and ATP as substrates and producing inorganic pyrophosphate. tRNA 3'-terminal CCA addition is required both for tRNA processing and repair. Also involved in tRNA surveillance by mediating tandem CCA addition to generate a CCACCA at the 3' terminus of unstable tRNAs. While stable tRNAs receive only 3'-terminal CCA, unstable tRNAs are marked with CCACCA and rapidly degraded. In Methylobacillus flagellatus (strain ATCC 51484 / DSM 6875 / VKM B-1610 / KT), this protein is Multifunctional CCA protein.